A 1476-amino-acid polypeptide reads, in one-letter code: ABC-type transporter FG02316 (1476 aa).

The N-linked (GlcNAc...) asparagine glycan is linked to Asn-2. The next 10 helical transmembrane spans lie at 23 to 43 (FTLL…LLLA), 64 to 84 (WLYC…AFLV), 97 to 117 (SLPA…LSYV), 156 to 176 (AAIT…AETI), 266 to 286 (ILFI…QPFL), 305 to 325 (QGYG…VTTG), 384 to 404 (VWAN…QLGL), 407 to 427 (LIPV…VSFV), 485 to 505 (LLIW…VLSF), and 532 to 552 (LFAL…SFMG). The region spanning 274 to 552 (LCFIGFTFCQ…FVTSLSSFMG (279 aa)) is the ABC transmembrane type-1 1 domain. Residues 586-615 (ISGVSSSEEKHPVSPIQESMMKTEPSGDSP) form a disordered region. An ABC transporter 1 domain is found at 622 to 847 (IRNASFGYDR…SDNYVSHSDV (226 aa)). N-linked (GlcNAc...) asparagine glycosylation is present at Asn-624. 654 to 661 (GPVGSGKS) serves as a coordination point for ATP. N-linked (GlcNAc...) asparagine glycosylation is found at Asn-682, Asn-696, Asn-798, and Asn-836. The interval 842-870 (VSHSDVSSPDGARSKAPSSGPASSSAPVP) is disordered. Residues 855-870 (SKAPSSGPASSSAPVP) show a composition bias toward low complexity. The next 6 membrane-spanning stretches (helical) occupy residues 906-926 (MNAI…AYIF), 950-970 (LGYY…FLVL), 1021-1041 (LIDM…VLCI), 1045-1065 (ILIA…LATL), 1137-1157 (WLTL…VVLV), and 1167-1187 (GLIG…KLLM). The ABC transmembrane type-1 2 domain maps to 916–1195 (VFVLAICAYI…LMTFWTTLET (280 aa)). The ABC transporter 2 domain occupies 1232 to 1464 (ILFDQVSAGY…GPDASTFASM (233 aa)). N-linked (GlcNAc...) asparagine glycosylation is present at Asn-1250. 1265-1272 (GRTGSGKS) contacts ATP. Asn-1414 carries an N-linked (GlcNAc...) asparagine glycan.

It belongs to the ABC transporter superfamily. ABCC family. Conjugate transporter (TC 3.A.1.208) subfamily.

It is found in the cell membrane. ABC-type transporter; part of the gene cluster that mediates the biosynthesis of the fusahexin, a cyclic hydrophobic hexapeptide with the amino acid sequence cyclo-(D-Ala-L-Leu-D-allo-Thr-L-Pro-D-Leu-L-Leu) that plays an important role in cell surface hydrophobicity. The chain is ABC-type transporter FG02316 from Gibberella zeae (strain ATCC MYA-4620 / CBS 123657 / FGSC 9075 / NRRL 31084 / PH-1) (Wheat head blight fungus).